A 358-amino-acid chain; its full sequence is Probable butyrate kinase (358 aa).

Belongs to the acetokinase family.

The protein resides in the cytoplasm. It carries out the reaction butanoate + ATP = butanoyl phosphate + ADP. The protein is Probable butyrate kinase of Oceanobacillus iheyensis (strain DSM 14371 / CIP 107618 / JCM 11309 / KCTC 3954 / HTE831).